The following is a 96-amino-acid chain: Protein YddL (96 aa).

The N-terminal stretch at 1-21 (MKLKIVAVVVTGLLAANVAHA) is a signal peptide.

The sequence is that of Protein YddL (yddL) from Escherichia coli (strain K12).